The following is a 458-amino-acid chain: Elongation factor 1-alpha (458 aa).

Gly-2 carries the n,N,N-trimethylglycine; by EFM7 modification. An N6,N6-dimethyllysine; by EFM7; alternate modification is found at Lys-3. Lys-3 carries the post-translational modification N6-methyllysine; by EFM7; alternate. In terms of domain architecture, tr-type G spans 5–240; that stretch reads KSHINVVVIG…DAIEQPSRPT (236 aa). Positions 14-21 are G1; it reads GHVDSGKS. At Ser-18 the chain carries Phosphoserine. Ser-21 and Thr-22 together coordinate GTP. Position 30 is an N6-methyllysine; by EFM1 (Lys-30). The interval 70 to 74 is G2; it reads GITID. Residue Thr-72 is modified to Phosphothreonine. Lys-79 is modified (N6,N6,N6-trimethyllysine; by EFM5). Thr-82 bears the Phosphothreonine mark. Residues 91 to 94 are G3; it reads DAPG. Asn-153, Lys-154, and Asp-156 together coordinate GTP. Residues 153–156 form a G4 region; sequence NKMD. Position 163 is a phosphoserine (Ser-163). GTP contacts are provided by Ser-192, Gly-193, and Trp-194. The G5 stretch occupies residues 192–194; sequence SGW. Residues Lys-224, Lys-242, and Lys-253 each participate in a glycyl lysine isopeptide (Lys-Gly) (interchain with G-Cter in ubiquitin) cross-link. A Phosphothreonine modification is found at Thr-259. A Glycyl lysine isopeptide (Lys-Gly) (interchain with G-Cter in ubiquitin) cross-link involves residue Lys-271. Phosphoserine is present on Ser-289. Lys-316 is modified (N6,N6-dimethyllysine; by EFM4; alternate). An N6-methyllysine; by EFM4; alternate modification is found at Lys-316. Lys-390 is modified (N6-methyllysine; by EFM6). Lys-393 is covalently cross-linked (Glycyl lysine isopeptide (Lys-Gly) (interchain with G-Cter in ubiquitin)). Ser-414 carries the post-translational modification Phosphoserine. A Phosphothreonine modification is found at Thr-430. A Glycyl lysine isopeptide (Lys-Gly) (interchain with G-Cter in ubiquitin) cross-link involves residue Lys-437. Lys-458 is subject to Lysine methyl ester.

It belongs to the TRAFAC class translation factor GTPase superfamily. Classic translation factor GTPase family. EF-Tu/EF-1A subfamily. As to quaternary structure, the eukaryotic elongation factor 1 complex (eEF1) is probably a heterohexamer. Two trimeric complexes, each composed of eEF1A (TEF1 or TEF2), eEF1Balpha (EFB1) and eEF1Bgamma (CAM1 or TEF4), are probably dimerized via the eF1Bgamma subunits. Interacts with eEF1Balpha; the interaction is direct. Interacts with GCN2 (via C-terminus); this interaction is direct, occurs in amino acid-repleted cells, may be stabilized in a ribosome-dependent manner, reduces GCN2-mediated eIF-2-alpha phosphorylation and is lost in amino acid-starved cells and by uncharged tRNAs. Interacts with CEX1. Interacts with elongation factor 3 (YEF3 or HEF3). Interacts with NAP1. Interacts with SRV2. Interacts with chaperone ZPR1; the interaction is required for its proper folding. Binds to actin and forms a ternary complex with BNI1 and profilin. Interacts with the proteasome, probably via RPT1. Associates with ribosomes. In terms of processing, S-thiolated in response to oxidative stress, probably inhibiting the protein and causing a reduction in protein synthesis. Glutaminylated at Glu-45. An L-glutamine is linked to Glu-45 via the alpha amino group. This glutaminylation is yeast-specific and not essential for the normal functions of eEF1A. However, eEF1A glutaminylation slightly reduced growth under antibiotic-induced translational stress conditions.

It localises to the cytoplasm. The protein localises to the cytoskeleton. It functions in the pathway protein biosynthesis; polypeptide chain elongation. Inhibited by narciclasine. In terms of biological role, GTP-binding component of the eukaryotic elongation factor 1 complex (eEF1). In its active GTP-bound form, binds to and delivers aminoacyl-tRNA to the A-site of ribosomes during protein biosynthesis. In the presence of a correct codon-anticodon match between the aminoacyl-tRNA and the A-site codon of the ribosome-bound mRNA, the ribosome acts as a GTPase activator and the GTP is hydrolyzed. The inactive GDP-bound form leaves the ribosome and must be recycled by its guanine nucleotide exchange factor (GEF) (eEF1B subcomplex) before binding another molecule of aminoacyl-tRNA. Required for nuclear export of aminoacyl-tRNAs. May also be involved in translational quality control by targeting cotranslationally damaged proteins to the proteasome. Also exhibits actin filament-binding and -bundling activities and is involved in cytoskeleton organization. Plays a role as a negative regulator of GCN2 kinase activity by inhibiting GCN2-mediated eIF-2-alpha phosphorylation in amino acid-repleted cells. The protein is Elongation factor 1-alpha (TEF1) of Saccharomyces cerevisiae (strain ATCC 204508 / S288c) (Baker's yeast).